The chain runs to 422 residues: 26S proteasome non-ATPase regulatory subunit 11 (422 aa).

One can recognise a PCI domain in the interval 224-392; the sequence is DWKTAYSYFY…GVLIIFDEPP (169 aa).

This sequence belongs to the proteasome subunit S9 family. In terms of assembly, component of the 19S proteasome regulatory particle complex. The 26S proteasome consists of a 20S core particle (CP) and two 19S regulatory subunits (RP). The regulatory particle is made of a lid composed of 9 subunits including PSMD11, a base containing 6 ATPases and few additional components.

It localises to the nucleus. The protein localises to the cytoplasm. Its subcellular location is the cytosol. Its function is as follows. Component of the 26S proteasome, a multiprotein complex involved in the ATP-dependent degradation of ubiquitinated proteins. This complex plays a key role in the maintenance of protein homeostasis by removing misfolded or damaged proteins, which could impair cellular functions, and by removing proteins whose functions are no longer required. Therefore, the proteasome participates in numerous cellular processes, including cell cycle progression, apoptosis, or DNA damage repair. In the complex, PSMD11 is required for proteasome assembly. Plays a key role in increased proteasome activity in embryonic stem cells (ESCs): its high expression in ESCs promotes enhanced assembly of the 26S proteasome, followed by higher proteasome activity. The chain is 26S proteasome non-ATPase regulatory subunit 11 (psmd11) from Xenopus tropicalis (Western clawed frog).